The chain runs to 245 residues: Heavy metal-associated isoprenylated plant protein 1 (245 aa).

Positions 28–92 (PVHVVLKIDF…KLQKKSKKKV (65 aa)) constitute an HMA 1 domain. The a metal cation site is built by C39 and C42. The segment at 91-113 (KVELISPKPKKDTKENNEKKAND) is disordered. The segment covering 99 to 113 (PKKDTKENNEKKAND) has biased composition (basic and acidic residues). Residues 121-188 (VTTVVLKVNC…KLKKTVQVVP (68 aa)) form the HMA 2 domain. Residues C132 and C135 each contribute to the a metal cation site. C242 carries the cysteine methyl ester modification. The S-farnesyl cysteine moiety is linked to residue C242. Positions 243-245 (SVM) are cleaved as a propeptide — removed in mature form.

Belongs to the HIPP family.

Its function is as follows. Heavy-metal-binding protein. This Arabidopsis thaliana (Mouse-ear cress) protein is Heavy metal-associated isoprenylated plant protein 1.